Reading from the N-terminus, the 160-residue chain is Lipoprotein signal peptidase (160 aa).

3 consecutive transmembrane segments (helical) span residues Val6–Leu26, Leu58–Leu78, and Phe95–Val115. Active-site residues include Asp117 and Asp135. A helical transmembrane segment spans residues Ser127–Leu147.

It belongs to the peptidase A8 family.

The protein resides in the cell inner membrane. The enzyme catalyses Release of signal peptides from bacterial membrane prolipoproteins. Hydrolyzes -Xaa-Yaa-Zaa-|-(S,diacylglyceryl)Cys-, in which Xaa is hydrophobic (preferably Leu), and Yaa (Ala or Ser) and Zaa (Gly or Ala) have small, neutral side chains.. It functions in the pathway protein modification; lipoprotein biosynthesis (signal peptide cleavage). In terms of biological role, this protein specifically catalyzes the removal of signal peptides from prolipoproteins. In Brucella abortus (strain S19), this protein is Lipoprotein signal peptidase.